Reading from the N-terminus, the 1357-residue chain is Mediator of RNA polymerase II transcription subunit 13 (1357 aa).

2 disordered regions span residues serine 356–phenylalanine 391 and aspartate 420–glutamate 487. Residues isoleucine 435–serine 451 are compositionally biased toward polar residues.

Belongs to the Mediator complex subunit 13 family. Component of the SRB8-11 complex, which itself associates with the Mediator complex.

Its subcellular location is the nucleus. Functionally, component of the SRB8-11 complex. The SRB8-11 complex is a regulatory module of the Mediator complex which is itself involved in regulation of basal and activated RNA polymerase II-dependent transcription. The SRB8-11 complex may be involved in the transcriptional repression of a subset of genes regulated by Mediator. It may inhibit the association of the Mediator complex with RNA polymerase II to form the holoenzyme complex. The protein is Mediator of RNA polymerase II transcription subunit 13 (SSN2) of Eremothecium gossypii (strain ATCC 10895 / CBS 109.51 / FGSC 9923 / NRRL Y-1056) (Yeast).